The chain runs to 138 residues: Putative esterase HI_1161 (138 aa).

The protein belongs to the thioesterase PaaI family.

The sequence is that of Putative esterase HI_1161 from Haemophilus influenzae (strain ATCC 51907 / DSM 11121 / KW20 / Rd).